The primary structure comprises 241 residues: Deoxyribose-phosphate aldolase (241 aa).

D95 functions as the Proton donor/acceptor in the catalytic mechanism. K159 acts as the Schiff-base intermediate with acetaldehyde in catalysis. The active-site Proton donor/acceptor is the K188.

Belongs to the DeoC/FbaB aldolase family. DeoC type 1 subfamily.

It is found in the cytoplasm. It carries out the reaction 2-deoxy-D-ribose 5-phosphate = D-glyceraldehyde 3-phosphate + acetaldehyde. It functions in the pathway carbohydrate degradation; 2-deoxy-D-ribose 1-phosphate degradation; D-glyceraldehyde 3-phosphate and acetaldehyde from 2-deoxy-alpha-D-ribose 1-phosphate: step 2/2. Catalyzes a reversible aldol reaction between acetaldehyde and D-glyceraldehyde 3-phosphate to generate 2-deoxy-D-ribose 5-phosphate. In Rhodopirellula baltica (strain DSM 10527 / NCIMB 13988 / SH1), this protein is Deoxyribose-phosphate aldolase.